The chain runs to 297 residues: MAFSITVPASTANLGPGFDSIGLALNRYLHLEVEQASKWSFICSSPGLENIGTDNLVTKAATFASKEWGKVLPPCQVVMKNDIPLSKGFGSSAAAIVAGIELAASVCGQFASKAEKARLASLWEGHPDNVAASIYGGLVIGTHSEESTEILHVEAPNIDLVALIPSKTLATKKARAVLPDMLSYKEAVQASSVANVLAAALVKQDWELVGKMMLADRFHQPYRQQLIPHLPDVCAYAQADEDAYGAALSGAGPIILCLVKEGKGEAFASRLHKQFPACRAEVMRPAVQGSAVSIAQA.

P84–A94 contacts ATP.

It belongs to the GHMP kinase family. Homoserine kinase subfamily.

It is found in the cytoplasm. It catalyses the reaction L-homoserine + ATP = O-phospho-L-homoserine + ADP + H(+). It functions in the pathway amino-acid biosynthesis; L-threonine biosynthesis; L-threonine from L-aspartate: step 4/5. Functionally, catalyzes the ATP-dependent phosphorylation of L-homoserine to L-homoserine phosphate. The polypeptide is Homoserine kinase (Shouchella clausii (strain KSM-K16) (Alkalihalobacillus clausii)).